The following is a 229-amino-acid chain: Transcriptional regulatory protein YxdJ (229 aa).

A Response regulatory domain is found at 3 to 116; it reads KIMIVEDSED…IVLAKIKSQI (114 aa). Asp52 is subject to 4-aspartylphosphate. The segment at residues 129–227 is a DNA-binding region (ompR/PhoB-type); it reads EKVVEYAGVQ…VRGEGYQLRA (99 aa).

Phosphorylated by YxdK.

It is found in the cytoplasm. In terms of biological role, probable member of the two-component regulatory system YxdK/YxdJ. Positively regulates the expression of the yxdLMyxeA operon by direct interaction with its promoter region. Could also indirectly regulate the expression of the dlt operon. The chain is Transcriptional regulatory protein YxdJ (yxdJ) from Bacillus subtilis (strain 168).